A 325-amino-acid polypeptide reads, in one-letter code: Solute carrier family 35 member B1 (325 aa).

8 helical membrane passes run 18–38, 54–74, 88–108, 139–159, 171–191, 213–233, 246–266, and 288–308; these read PVCF…QESI, FALS…KLLI, WLYA…NSAL, YPLA…LFMY, IFGY…LTGV, LWST…WEFL, ILLF…TVVY, and VILF…LVFL. The short motif at 321-325 is the Di-lysine motif element; the sequence is KKTSH.

The protein belongs to the nucleotide-sugar transporter family. SLC35B subfamily.

It is found in the endoplasmic reticulum membrane. In terms of biological role, probable sugar transporter. The protein is Solute carrier family 35 member B1 (SLC35B1) of Gallus gallus (Chicken).